The following is a 447-amino-acid chain: Transcriptional enhancer factor TEF-4 (447 aa).

Disordered stretches follow at residues 1-46 and 183-218; these read MGEP…GVWS and TPFT…PPAW. Positions 11-20 are enriched in low complexity; the sequence is DDGSGWTGSE. Residues 25 to 40 are compositionally biased toward gly residues; it reads EGTGGSEGAGGDGGPD. Positions 38 to 114 form a DNA-binding region, TEA; sequence GPDAEGVWSP…QVLARRKSRE (77 aa). Residues 172-447 form a transcriptional activation region; that stretch reads WNVPDVKPFS…QHHIYRLVRD (276 aa). Low complexity predominate over residues 183–206; it reads TPFTLSLTPPSTDLPGYEPPQALS. The segment covering 207-216 has biased composition (pro residues); the sequence is PLPPPTPSPP.

As to quaternary structure, interacts with YAP1 and WWTR1/TAZ.

The protein localises to the nucleus. In terms of biological role, transcription factor which plays a key role in the Hippo signaling pathway, a pathway involved in organ size control and tumor suppression by restricting proliferation and promoting apoptosis. The core of this pathway is composed of a kinase cascade wherein MST1/MST2, in complex with its regulatory protein SAV1, phosphorylates and activates LATS1/2 in complex with its regulatory protein MOB1, which in turn phosphorylates and inactivates YAP1 oncoprotein and WWTR1/TAZ. Acts by mediating gene expression of YAP1 and WWTR1/TAZ, thereby regulating cell proliferation, migration and epithelial mesenchymal transition (EMT) induction. Binds to the SPH and GT-IIC 'enhansons' (5'-GTGGAATGT-3'). May be involved in the gene regulation of neural development. Binds to the M-CAT motif. In Homo sapiens (Human), this protein is Transcriptional enhancer factor TEF-4 (TEAD2).